The primary structure comprises 108 residues: MEQYSEACIEACIDCMKACNHCFTKCLEESVQHHLSGCIRLDRECADICALAVKAMQTDSPFMKEICALCADICEACGTECGKHDHDHCQACAKACFTCAEQCRSMAA.

This is an uncharacterized protein from Bacillus subtilis (strain 168).